A 339-amino-acid chain; its full sequence is Beta-ketoacyl-[acyl-carrier-protein] synthase III (339 aa).

Residues Cys119 and His262 contribute to the active site. Residues 263–267 (QANQR) form an ACP-binding region. Asn292 is a catalytic residue.

Belongs to the thiolase-like superfamily. FabH family. As to quaternary structure, homodimer.

It is found in the cytoplasm. It catalyses the reaction malonyl-[ACP] + acetyl-CoA + H(+) = 3-oxobutanoyl-[ACP] + CO2 + CoA. It functions in the pathway lipid metabolism; fatty acid biosynthesis. In terms of biological role, catalyzes the condensation reaction of fatty acid synthesis by the addition to an acyl acceptor of two carbons from malonyl-ACP. Catalyzes the first condensation reaction which initiates fatty acid synthesis and may therefore play a role in governing the total rate of fatty acid production. Possesses both acetoacetyl-ACP synthase and acetyl transacylase activities. Its substrate specificity determines the biosynthesis of branched-chain and/or straight-chain of fatty acids. This is Beta-ketoacyl-[acyl-carrier-protein] synthase III from Prochlorococcus marinus (strain MIT 9313).